Consider the following 100-residue polypeptide: MGRFVVWPSELDSRLSRKYGRIVPRSIAVESPRVEEIVRAAEELKFKVIRVEEDKLNPRLSGIDEELRTFGMIVLESPYGKSKSLKLIAQKIREFRRRSA.

This sequence belongs to the SRP19 family. Part of the signal recognition particle protein translocation system, which is composed of SRP and FtsY. Archaeal SRP consists of a 7S RNA molecule of 300 nucleotides and two protein subunits: SRP54 and SRP19.

It is found in the cytoplasm. Its function is as follows. Involved in targeting and insertion of nascent membrane proteins into the cytoplasmic membrane. Binds directly to 7S RNA and mediates binding of the 54 kDa subunit of the SRP. The sequence is that of Signal recognition particle 19 kDa protein from Pyrococcus furiosus (strain ATCC 43587 / DSM 3638 / JCM 8422 / Vc1).